The following is a 396-amino-acid chain: Obg-like ATPase 1 (396 aa).

The 261-residue stretch at 23-283 (LKIGIVGLPN…LSAEERQKYL (261 aa)) folds into the OBG-type G domain. 32–37 (NVGKST) provides a ligand contact to ATP. Mg(2+)-binding residues include Ser36 and Thr56. Residue Leu231 coordinates ATP. Positions 267–274 (LELKLQEL) match the Nuclear export signal motif. Lys294 carries the N6-acetyllysine modification. Positions 304–387 (QLEYFFTAGP…EDGDIIFFKF (84 aa)) constitute a TGS domain.

This sequence belongs to the TRAFAC class OBG-HflX-like GTPase superfamily. OBG GTPase family. YchF/OLA1 subfamily. As to quaternary structure, monomer. Mg(2+) is required as a cofactor. As to expression, expressed in all tissues tested but its expression is more abundant in testis, liver, lung, and brain. Overexpressed in several malignancies, including cancers of the colon, rectum, ovary, lung, stomach, and uterus.

It is found in the cytoplasm. The protein resides in the nucleus. Its subcellular location is the nucleolus. In terms of biological role, hydrolyzes ATP, and can also hydrolyze GTP with lower efficiency. Has lower affinity for GTP. The polypeptide is Obg-like ATPase 1 (Homo sapiens (Human)).